The primary structure comprises 687 residues: MDHTQQSRKAAEAQPSRSKQTRFCDGFKLFLAALSFSYICKALGGVVMKSSITQIERRFDIPSSISGLIDGGFEIGNLLVIVFVSYFGSKLHRPKLIGIGCFIMGIGSILTALPHFFMGYYKYAKENDIGSLGNSTLTCFINQMTSPTGPSPEIVEKGCEKGLKSHMWIYVLMGNMLRGIGETPIVPLGISYLDDFAKEGHTSMHLGTLHTIAMIGPILGFIMSSVFAKIYVDVGYVDLNSVRITPNDARWVGAWWLSFIVNGLLCITSSIPFFFLPKIPKRSQEERKNSVSLHAPKTDEEKKHMTNLTKQEEQDPSNMTGFLRSLRSILTNEIYVIFLILTLLQVSGFIGSFTYLFKFIEQQFGRTASQANFLLGIITIPTMATAMFLGGYIVKKFKLTSVGIAKFVFFTSSVAYAFQFLYFPLLCENKPFAGLTLTYDGMNPVDSHIDVPLSYCNSDCSCDKNQWEPICGENGVTYISPCLAGCKSFRGDKKPNNTEFYDCSCISNSGNNSAHLGECPRYKCKTNYYFYIILQVTVSFFTAMGSPSLILILMKSVQPELKSLAMGFHSLIIRALGGILAPIYYGAFIDRTCIKWSVTSCGKRGACRLYNSRLFGFSYLGLNLALKTPPLFLYVVLIYFTKRKYKRNDNKTLENGRQFTDEGNPDSVNKNGYYCVPYDEQSNETPL.

Over 1–28 (MDHTQQSRKAAEAQPSRSKQTRFCDGFK) the chain is Cytoplasmic. Residues 29–48 (LFLAALSFSYICKALGGVVM) form a helical membrane-spanning segment. Over 49 to 67 (KSSITQIERRFDIPSSISG) the chain is Extracellular. The chain crosses the membrane as a helical span at residues 68–88 (LIDGGFEIGNLLVIVFVSYFG). At 89 to 94 (SKLHRP) the chain is on the cytoplasmic side. The helical transmembrane segment at 95–119 (KLIGIGCFIMGIGSILTALPHFFMG) threads the bilayer. The Extracellular portion of the chain corresponds to 120–165 (YYKYAKENDIGSLGNSTLTCFINQMTSPTGPSPEIVEKGCEKGLKS). Asn-134 carries an N-linked (GlcNAc...) asparagine glycan. Residues 166–194 (HMWIYVLMGNMLRGIGETPIVPLGISYLD) form a helical membrane-spanning segment. The Cytoplasmic portion of the chain corresponds to 195–213 (DFAKEGHTSMHLGTLHTIA). Residues 214–234 (MIGPILGFIMSSVFAKIYVDV) traverse the membrane as a helical segment. Residues 235 to 252 (GYVDLNSVRITPNDARWV) are Extracellular-facing. Residues 253-277 (GAWWLSFIVNGLLCITSSIPFFFLP) traverse the membrane as a helical segment. Topologically, residues 278–328 (KIPKRSQEERKNSVSLHAPKTDEEKKHMTNLTKQEEQDPSNMTGFLRSLRS) are cytoplasmic. The segment at 286 to 311 (ERKNSVSLHAPKTDEEKKHMTNLTKQ) is disordered. Phosphoserine occurs at positions 290 and 292. Residues 329 to 350 (ILTNEIYVIFLILTLLQVSGFI) traverse the membrane as a helical segment. Topologically, residues 351–370 (GSFTYLFKFIEQQFGRTASQ) are extracellular. Residues 371–394 (ANFLLGIITIPTMATAMFLGGYIV) form a helical membrane-spanning segment. Residues 395–398 (KKFK) are Cytoplasmic-facing. A helical membrane pass occupies residues 399 to 422 (LTSVGIAKFVFFTSSVAYAFQFLY). Residues 423–531 (FPLLCENKPF…YKCKTNYYFY (109 aa)) lie on the Extracellular side of the membrane. One can recognise a Kazal-like domain in the interval 450–507 (DVPLSYCNSDCSCDKNQWEPICGENGVTYISPCLAGCKSFRGDKKPNNTEFYDCSCIS). 3 disulfides stabilise this stretch: Cys-456–Cys-486, Cys-462–Cys-482, and Cys-471–Cys-505. Asn-496 and Asn-511 each carry an N-linked (GlcNAc...) asparagine glycan. A helical transmembrane segment spans residues 532–554 (IILQVTVSFFTAMGSPSLILILM). Topologically, residues 555-563 (KSVQPELKS) are cytoplasmic. The helical transmembrane segment at 564–589 (LAMGFHSLIIRALGGILAPIYYGAFI) threads the bilayer. The Extracellular portion of the chain corresponds to 590–623 (DRTCIKWSVTSCGKRGACRLYNSRLFGFSYLGLN). A helical transmembrane segment spans residues 624-641 (LALKTPPLFLYVVLIYFT). Topologically, residues 642–687 (KRKYKRNDNKTLENGRQFTDEGNPDSVNKNGYYCVPYDEQSNETPL) are cytoplasmic. At Thr-660 the chain carries Phosphothreonine. Ser-667 is subject to Phosphoserine.

Belongs to the organo anion transporter (TC 2.A.60) family. Liver specific. Expression is highest in central perivenous hepatocytes and lowest in the periportal region. Isoform 1 predominates. Not detected in heart, brain, kidney, skeletal muscle, lung, testis or spleen.

Its subcellular location is the basolateral cell membrane. It catalyses the reaction estrone 3-sulfate(out) = estrone 3-sulfate(in). The catalysed reaction is taurocholate(out) = taurocholate(in). It carries out the reaction prostaglandin E2(out) = prostaglandin E2(in). The enzyme catalyses L-thyroxine(out) = L-thyroxine(in). Functionally, mediates the Na(+)-independent uptake of organic anions such as taurochlate, bromosulfophthalein and steroid conjugates (estrone 3-sulfate, 17-beta-glucuronosyl estradiol, dehydroepiandrosterone sulfate). Also transports prostaglandin E2 and L-thyroxine (T4). Shows a pH-sensitive substrate specificity which may be ascribed to the protonation state of the binding site and leads to a stimulation of substrate transport in an acidic microenvironment. Hydrogencarbonate/HCO3(-) acts as the probable counteranion that exchanges for organic anions. The protein is Solute carrier organic anion transporter family member 1B2 (Slco1b2) of Rattus norvegicus (Rat).